Here is a 529-residue protein sequence, read N- to C-terminus: E3 ubiquitin-protein ligase arih1 (529 aa).

Disordered regions lie at residues Met1–Glu29 and Glu46–Glu69. Positions Cys51–Gly64 are enriched in gly residues. A UBA-like region spans residues Thr77–Asn125. A TRIAD supradomain region spans residues Leu154–Asn365. Cys158, Cys161, Cys175, His177, Cys180, Cys183, Cys203, Cys208, Cys248, Cys253, Cys269, Cys271, Cys276, Cys279, His284, Cys289, Cys316, and Cys319 together coordinate Zn(2+). Residues Cys158–Cys208 form an RING-type 1 zinc finger. The segment at Leu228–Cys289 adopts an IBR-type zinc-finger fold. The segment at Cys316–Cys347 adopts an RING-type 2; atypical zinc-finger fold. Cys329 is an active-site residue. Zn(2+) contacts are provided by Cys334, Cys339, Cys344, Cys347, His354, and Cys361. The ariadne domain stretch occupies residues Arg380–Asp529.

It belongs to the RBR family. Ariadne subfamily. As to quaternary structure, interacts (via the first RING-type zinc finger) with ube2l3. Associates with cullin-RING ubiquitin ligase (CRL) complexes containing neddylated cullin.

The protein resides in the cytoplasm. The protein localises to the nucleus. It carries out the reaction [E2 ubiquitin-conjugating enzyme]-S-ubiquitinyl-L-cysteine + [acceptor protein]-L-lysine = [E2 ubiquitin-conjugating enzyme]-L-cysteine + [acceptor protein]-N(6)-ubiquitinyl-L-lysine.. It functions in the pathway protein modification; protein ubiquitination. Its activity is regulated as follows. Autoinhibited by the ariadne domain, which masks the second RING-type zinc finger that contains the active site and inhibits the E3 activity. Inhibition is relieved upon binding to neddylated cullin-RING ubiquitin ligase complexes, which activate the E3 ligase activity of ARIH1. E3 ubiquitin-protein ligase, which catalyzes ubiquitination of target proteins together with ubiquitin-conjugating enzyme E2 ube2l3. Acts as an atypical E3 ubiquitin-protein ligase by working together with cullin-RING ubiquitin ligase (CRL) complexes and initiating ubiquitination of CRL substrates: associates with CRL complexes and specifically mediates addition of the first ubiquitin on CRLs targets. The initial ubiquitin is then elongated. E3 ubiquitin-protein ligase activity is activated upon binding to neddylated cullin-RING ubiquitin ligase complexes. The chain is E3 ubiquitin-protein ligase arih1 (arih1) from Xenopus laevis (African clawed frog).